Consider the following 455-residue polypeptide: Bifunctional protein GlmU (455 aa).

The tract at residues 1–228 (MTQPLHVIIL…AQEAEGANDP (228 aa)) is pyrophosphorylase. Residues 10–13 (LAAG), Lys-24, Gln-76, 81–82 (GT), 103–105 (YGD), Gly-138, Glu-153, Asn-168, and Asn-226 each bind UDP-N-acetyl-alpha-D-glucosamine. Asp-105 provides a ligand contact to Mg(2+). Position 226 (Asn-226) interacts with Mg(2+). The segment at 229 to 249 (WQLSQLERAWQRRAVRALCAQ) is linker. The interval 250–455 (GARVRDPARL…DGWKRPLKKS (206 aa)) is N-acetyltransferase. The UDP-N-acetyl-alpha-D-glucosamine site is built by Arg-332 and Lys-350. His-362 (proton acceptor) is an active-site residue. The UDP-N-acetyl-alpha-D-glucosamine site is built by Tyr-365 and Asn-376. Residues Ala-379, 385–386 (NY), Ser-404, Ala-422, and Arg-439 contribute to the acetyl-CoA site.

The protein in the N-terminal section; belongs to the N-acetylglucosamine-1-phosphate uridyltransferase family. It in the C-terminal section; belongs to the transferase hexapeptide repeat family. Homotrimer. The cofactor is Mg(2+).

It is found in the cytoplasm. It catalyses the reaction alpha-D-glucosamine 1-phosphate + acetyl-CoA = N-acetyl-alpha-D-glucosamine 1-phosphate + CoA + H(+). The catalysed reaction is N-acetyl-alpha-D-glucosamine 1-phosphate + UTP + H(+) = UDP-N-acetyl-alpha-D-glucosamine + diphosphate. It functions in the pathway nucleotide-sugar biosynthesis; UDP-N-acetyl-alpha-D-glucosamine biosynthesis; N-acetyl-alpha-D-glucosamine 1-phosphate from alpha-D-glucosamine 6-phosphate (route II): step 2/2. It participates in nucleotide-sugar biosynthesis; UDP-N-acetyl-alpha-D-glucosamine biosynthesis; UDP-N-acetyl-alpha-D-glucosamine from N-acetyl-alpha-D-glucosamine 1-phosphate: step 1/1. Its pathway is bacterial outer membrane biogenesis; LPS lipid A biosynthesis. Functionally, catalyzes the last two sequential reactions in the de novo biosynthetic pathway for UDP-N-acetylglucosamine (UDP-GlcNAc). The C-terminal domain catalyzes the transfer of acetyl group from acetyl coenzyme A to glucosamine-1-phosphate (GlcN-1-P) to produce N-acetylglucosamine-1-phosphate (GlcNAc-1-P), which is converted into UDP-GlcNAc by the transfer of uridine 5-monophosphate (from uridine 5-triphosphate), a reaction catalyzed by the N-terminal domain. The polypeptide is Bifunctional protein GlmU (Stenotrophomonas maltophilia (strain K279a)).